Consider the following 396-residue polypeptide: 1-deoxy-D-xylulose 5-phosphate reductoisomerase (396 aa).

Positions 15, 16, 18, and 127 each coordinate NADPH. Lys128 contributes to the 1-deoxy-D-xylulose 5-phosphate binding site. Residue Glu129 coordinates NADPH. Residue Asp153 participates in Mn(2+) binding. The 1-deoxy-D-xylulose 5-phosphate site is built by Ser154, Glu155, Ser177, and His200. Glu155 contributes to the Mn(2+) binding site. Gly206 is an NADPH binding site. 4 residues coordinate 1-deoxy-D-xylulose 5-phosphate: Ser213, Asn218, Lys219, and Glu222. Glu222 is a binding site for Mn(2+).

Belongs to the DXR family. Mg(2+) serves as cofactor. Mn(2+) is required as a cofactor.

It catalyses the reaction 2-C-methyl-D-erythritol 4-phosphate + NADP(+) = 1-deoxy-D-xylulose 5-phosphate + NADPH + H(+). It functions in the pathway isoprenoid biosynthesis; isopentenyl diphosphate biosynthesis via DXP pathway; isopentenyl diphosphate from 1-deoxy-D-xylulose 5-phosphate: step 1/6. Catalyzes the NADPH-dependent rearrangement and reduction of 1-deoxy-D-xylulose-5-phosphate (DXP) to 2-C-methyl-D-erythritol 4-phosphate (MEP). This Anaplasma marginale (strain Florida) protein is 1-deoxy-D-xylulose 5-phosphate reductoisomerase.